The chain runs to 422 residues: Dihydrolipoyllysine-residue succinyltransferase component of 2-oxoglutarate dehydrogenase complex (422 aa).

The Lipoyl-binding domain occupies 1–76; sequence MPEVKVPELA…EVGQAIAVIG (76 aa). Lys42 carries the N6-lipoyllysine modification. Positions 77-184 are disordered; that stretch reads EGSGNASKEN…APAKEEKKYN (108 aa). Composition is skewed to polar residues over residues 80–94 and 114–130; these read GNASKENSNDNTPQQ and EVNQTNDYNQQRVNATP. In terms of domain architecture, Peripheral subunit-binding (PSBD) spans 127–163; it reads NATPSARRYARENGVNLAEVSPKTNDVVRKEDIDKKQ. The span at 152–163 shows a compositional bias: basic and acidic residues; that stretch reads DVVRKEDIDKKQ. The segment covering 164–176 has biased composition (low complexity); that stretch reads QAPASTQTTQQAP. Residues His393 and Asp397 contribute to the active site.

The protein belongs to the 2-oxoacid dehydrogenase family. In terms of assembly, forms a 24-polypeptide structural core with octahedral symmetry. Part of the 2-oxoglutarate dehydrogenase (OGDH) complex composed of E1 (2-oxoglutarate dehydrogenase), E2 (dihydrolipoamide succinyltransferase) and E3 (dihydrolipoamide dehydrogenase); the complex contains multiple copies of the three enzymatic components (E1, E2 and E3). It depends on (R)-lipoate as a cofactor.

It catalyses the reaction N(6)-[(R)-dihydrolipoyl]-L-lysyl-[protein] + succinyl-CoA = N(6)-[(R)-S(8)-succinyldihydrolipoyl]-L-lysyl-[protein] + CoA. It participates in amino-acid degradation; L-lysine degradation via saccharopine pathway; glutaryl-CoA from L-lysine: step 6/6. Its function is as follows. E2 component of the 2-oxoglutarate dehydrogenase (OGDH) complex which catalyzes the second step in the conversion of 2-oxoglutarate to succinyl-CoA and CO(2). In Staphylococcus aureus (strain bovine RF122 / ET3-1), this protein is Dihydrolipoyllysine-residue succinyltransferase component of 2-oxoglutarate dehydrogenase complex (odhB).